The primary structure comprises 227 residues: 7-cyano-7-deazaguanine synthase (227 aa).

7 to 17 (VSGGMDSLVAT) is an ATP binding site. C187, C195, C198, and C201 together coordinate Zn(2+).

It belongs to the QueC family. The cofactor is Zn(2+).

The catalysed reaction is 7-carboxy-7-deazaguanine + NH4(+) + ATP = 7-cyano-7-deazaguanine + ADP + phosphate + H2O + H(+). It participates in purine metabolism; 7-cyano-7-deazaguanine biosynthesis. Its function is as follows. Catalyzes the ATP-dependent conversion of 7-carboxy-7-deazaguanine (CDG) to 7-cyano-7-deazaguanine (preQ(0)). In Chlorobaculum parvum (strain DSM 263 / NCIMB 8327) (Chlorobium vibrioforme subsp. thiosulfatophilum), this protein is 7-cyano-7-deazaguanine synthase.